The sequence spans 422 residues: 2-(3-amino-3-carboxypropyl)histidine synthase subunit 1 (422 aa).

The [4Fe-4S] cluster site is built by Cys128, Cys234, and Cys363.

It belongs to the DPH1/DPH2 family. DPH1 subfamily. In terms of assembly, component of the 2-(3-amino-3-carboxypropyl)histidine synthase complex composed of DPH1, DPH2, DPH3 and a NADH-dependent reductase, predominantly CBR1. The cofactor is [4Fe-4S] cluster.

The protein localises to the cytoplasm. It catalyses the reaction L-histidyl-[translation elongation factor 2] + S-adenosyl-L-methionine = 2-[(3S)-amino-3-carboxypropyl]-L-histidyl-[translation elongation factor 2] + S-methyl-5'-thioadenosine + H(+). It functions in the pathway protein modification; peptidyl-diphthamide biosynthesis. Its function is as follows. Catalyzes the first step of diphthamide biosynthesis, a post-translational modification of histidine which occurs in elongation factor 2. DPH1 and DPH2 transfer a 3-amino-3-carboxypropyl (ACP) group from S-adenosyl-L-methionine (SAM) to a histidine residue, the reaction is assisted by a reduction system comprising DPH3 and a NADH-dependent reductase, predominantly CBR1. The protein is 2-(3-amino-3-carboxypropyl)histidine synthase subunit 1 (DPH1) of Kluyveromyces lactis (strain ATCC 8585 / CBS 2359 / DSM 70799 / NBRC 1267 / NRRL Y-1140 / WM37) (Yeast).